We begin with the raw amino-acid sequence, 91 residues long: Small ribosomal subunit protein uS19 (91 aa).

The protein belongs to the universal ribosomal protein uS19 family.

Its function is as follows. Protein S19 forms a complex with S13 that binds strongly to the 16S ribosomal RNA. The protein is Small ribosomal subunit protein uS19 of Prochlorococcus marinus (strain MIT 9515).